The chain runs to 444 residues: Docking protein 3 (444 aa).

Residues 7–123 (PVKDGLLYQQ…WMDPICQLAF (117 aa)) enclose the PH domain. The segment at 47 to 66 (DVRDGGLGPGGDRPAGPGRR) is disordered. Ser-138 carries the phosphoserine modification. Residues 157 to 261 (EVAEFPVVVQ…ARQRERLPEL (105 aa)) form the IRS-type PTB domain. 3 positions are modified to phosphoserine: Ser-274, Ser-308, and Ser-314. A Phosphotyrosine modification is found at Tyr-325. Positions 354-390 (GLSNGGPEAQEGPPGGRSPLGSPIYHNSEELSWPGSA) are disordered. Positions 358–376 (GGPEAQEGPPGGRSPLGSP) are enriched in low complexity. A Phosphoserine modification is found at Ser-371.

Belongs to the DOK family. Type A subfamily. As to quaternary structure, on tyrosine phosphorylation, interacts with CSK and INPP5D/SHIP1 via their SH2 domains. Binds ABL1 through the PTB domain and in a kinase-dependent manner. Does not interact with RasGAP. In terms of processing, constitutively tyrosine-phosphorylated. Post-translationally, on IL2 stimulation, phosphorylated on C-terminal tyrosine residues possibly by Src kinases. Can also be phosphorylated by ABL1 kinase.

The protein localises to the cytoplasm. It is found in the cell membrane. Functionally, DOK proteins are enzymatically inert adaptor or scaffolding proteins. They provide a docking platform for the assembly of multimolecular signaling complexes. DOK3 is a negative regulator of JNK signaling in B-cells through interaction with INPP5D/SHIP1. May modulate ABL1 function. The protein is Docking protein 3 (Dok3) of Rattus norvegicus (Rat).